The primary structure comprises 456 residues: MRPLSSAALLSAIGAVAAQVGPWGQCGGQSYTGGTSCVSGWACVFLNDWYSQCQPGAEYTPPLCGRNDNPNIFQATTTSTSVSATAPPSSTSSSTASVSSSTSSTPIPTSSGSFVKAEGLKFNIDGETKYFAGTNAYWLPFLTNNADVDSVFDHLQQTGLKILRTWGFNDVNSVPNPGTVYFQLHDPSTSTTTINTGADGLQRLDYVVSAAEKHGIKLLIPLVNNWDDYGGMNAYIKAYGGSKTEWYTNSKIQSVYQAYIKAVVSRYRDSPAIMAWELSNEARCQGCSTDVIYNWATKTSAYIKSLDPNHMVATGEEGMGLTVDSDGSYPYSTYEGSDFEKNLAIPHIDFGVFHLYTADWGITDNSWGNRWVTSHAKLCEAAGKPCLFEEYGLKDDHCSAAVVWQKTSLTTAGMAADLFWQYGQTLSTGQSPNDRYTIYYGTSDWQCAVIDHVSRI.

Positions 1 to 18 (MRPLSSAALLSAIGAVAA) are cleaved as a signal peptide. In terms of domain architecture, CBM1 spans 19–54 (QVGPWGQCGGQSYTGGTSCVSGWACVFLNDWYSQCQ). The tract at residues 79-110 (STSVSATAPPSSTSSSTASVSSSTSSTPIPTS) is disordered. Residues 79–113 (STSVSATAPPSSTSSSTASVSSSTSSTPIPTSSGS) form a ser-rich linker region. A catalytic region spans residues 114–456 (FVKAEGLKFN…CAVIDHVSRI (343 aa)). Substrate is bound by residues tryptophan 166 and asparagine 280. Residue glutamate 281 is the Proton donor of the active site. Tyrosine 356 contacts substrate. Glutamate 390 functions as the Nucleophile in the catalytic mechanism. Residue tryptophan 420 participates in substrate binding.

The protein belongs to the glycosyl hydrolase 5 (cellulase A) family.

The protein resides in the secreted. It catalyses the reaction Random hydrolysis of (1-&gt;4)-beta-D-mannosidic linkages in mannans, galactomannans and glucomannans.. Its function is as follows. Endo-1,4-mannanase, a crucial enzyme for depolymerization of seed galactomannans and wood galactoglucomannans. The sequence is that of Probable mannan endo-1,4-beta-mannosidase F (manF) from Neosartorya fischeri (strain ATCC 1020 / DSM 3700 / CBS 544.65 / FGSC A1164 / JCM 1740 / NRRL 181 / WB 181) (Aspergillus fischerianus).